The sequence spans 368 residues: sn-1 linoleoyl-lipid 6-desaturase (368 aa).

2 helical membrane passes run 47–67 (IILA…DVLW) and 68–88 (MKLL…FNIS). A Histidine box-1 motif is present at residues 89–93 (HDGNH). The Histidine box-2 signature appears at 124-129 (HNVLHH). 3 consecutive transmembrane segments (helical) span residues 164 to 184 (WFIW…DVQT), 204 to 224 (IATL…IPIA), and 233 to 253 (VIGA…VFML). The Histidine box-3 signature appears at 305 to 309 (HHLFP).

Belongs to the fatty acid desaturase type 2 family. It depends on Fe(2+) as a cofactor.

The protein resides in the cell inner membrane. It is found in the cellular thylakoid membrane. It catalyses the reaction a 1-[(9Z,12Z)-octadecdienoyl]-2-acyl-glycerolipid + 2 reduced [2Fe-2S]-[ferredoxin] + O2 + 2 H(+) = a 1-[(6Z,9Z,12Z)-octadectrienoyl]-2-acyl-glycerolipid + 2 oxidized [2Fe-2S]-[ferredoxin] + 2 H2O. It functions in the pathway lipid metabolism; polyunsaturated fatty acid biosynthesis. With respect to regulation, activity requires ferredoxin, which is the natural electron donor, or cytochrome b5. In addition, activity is increased in the presence of the intermediate electron donors, NADPH and FADH(2). Functionally, desaturase involved in fatty acid biosynthesis. Introduces a double bond at carbon 6 of linoleoyl group (18:2) attached to the sn-1 position of the glycerol moiety of membrane glycerolipids, leading to the formation of gamma-linolenic acid (GLA). In Arthrospira platensis (Spirulina platensis), this protein is sn-1 linoleoyl-lipid 6-desaturase.